A 479-amino-acid polypeptide reads, in one-letter code: 3-isopropylmalate dehydratase large subunit (479 aa).

[4Fe-4S] cluster contacts are provided by Cys-353, Cys-414, and Cys-417.

Belongs to the aconitase/IPM isomerase family. LeuC type 1 subfamily. As to quaternary structure, heterodimer of LeuC and LeuD. [4Fe-4S] cluster is required as a cofactor.

It catalyses the reaction (2R,3S)-3-isopropylmalate = (2S)-2-isopropylmalate. It participates in amino-acid biosynthesis; L-leucine biosynthesis; L-leucine from 3-methyl-2-oxobutanoate: step 2/4. Catalyzes the isomerization between 2-isopropylmalate and 3-isopropylmalate, via the formation of 2-isopropylmaleate. The polypeptide is 3-isopropylmalate dehydratase large subunit (Xanthomonas campestris pv. campestris (strain 8004)).